A 370-amino-acid polypeptide reads, in one-letter code: Putative agmatine deiminase (370 aa).

Residues 1–19 show a composition bias toward polar residues; sequence MTNMNVDATQLTTKPSQDG. Residues 1 to 20 form a disordered region; it reads MTNMNVDATQLTTKPSQDGF. The Amidino-cysteine intermediate role is filled by cysteine 361.

Belongs to the agmatine deiminase family.

The enzyme catalyses agmatine + H2O = N-carbamoylputrescine + NH4(+). The protein is Putative agmatine deiminase of Shewanella frigidimarina (strain NCIMB 400).